Reading from the N-terminus, the 228-residue chain is E3 ubiquitin-protein ligase RNF114 (228 aa).

The segment at 29–68 (CPVCLEVYEKPVQVPCGHVFCSACLQECLKPKKPVCGVCR) adopts an RING-type zinc-finger fold. Residues Cys-91 and Cys-94 each coordinate Zn(2+). The C2HC RNF-type zinc-finger motif lies at 91–110 (CHGCRKKFFLSKIRSHVATC). Lys-102 bears the N6-acetyllysine mark. 2 residues coordinate Zn(2+): His-106 and Cys-110. An N6-acetyllysine modification is found at Lys-112.

As to quaternary structure, interacts with XAF1, the interaction increases XAF1 stability and proapoptotic effects, and may regulate IFN signaling. Autoubiquitinated. Polyubiquitinated in the presence of E2 enzymes UBE2D1, UBE2D2 and UBE2D3, but only monoubiquitinated in the presence of UBE2E1.

Its subcellular location is the cytoplasm. The protein resides in the nucleus. The catalysed reaction is S-ubiquitinyl-[E2 ubiquitin-conjugating enzyme]-L-cysteine + [acceptor protein]-L-lysine = [E2 ubiquitin-conjugating enzyme]-L-cysteine + N(6)-ubiquitinyl-[acceptor protein]-L-lysine.. It participates in protein modification; protein ubiquitination. Its function is as follows. E3 ubiquitin-protein ligase that promotes the ubiquitination of various substrates. In turn, participates in the regulation of many biological processes including cell cycle, apoptosis, osteoclastogenesis as well as innate or adaptive immunity. Acts as negative regulator of NF-kappa-B-dependent transcription by promoting the ubiquitination and stabilization of the NF-kappa-B inhibitor TNFAIP3. May promote the ubiquitination of TRAF6 as well. Also acts as a negative regulator of T-cell activation. Inhibits cellular dsRNA responses and interferon production by targeting MAVS component for proteasomal degradation. Ubiquitinates the CDK inhibitor CDKN1A leading to its degradationand probably also CDKN1B and CDKN1C. This activity stimulates cell cycle G1-to-S phase transition and suppresses cellular senescence. May play a role in spermatogenesis. The chain is E3 ubiquitin-protein ligase RNF114 (RNF114) from Pan troglodytes (Chimpanzee).